The sequence spans 345 residues: Uroporphyrinogen decarboxylase (345 aa).

Substrate contacts are provided by residues 27-31, F46, D76, Y152, S207, and H320; that span reads RQAGR.

This sequence belongs to the uroporphyrinogen decarboxylase family. Homodimer.

Its subcellular location is the cytoplasm. It carries out the reaction uroporphyrinogen III + 4 H(+) = coproporphyrinogen III + 4 CO2. The protein operates within porphyrin-containing compound metabolism; protoporphyrin-IX biosynthesis; coproporphyrinogen-III from 5-aminolevulinate: step 4/4. Its function is as follows. Catalyzes the decarboxylation of four acetate groups of uroporphyrinogen-III to yield coproporphyrinogen-III. This chain is Uroporphyrinogen decarboxylase, found in Geobacillus sp. (strain WCH70).